Consider the following 285-residue polypeptide: Probable endonuclease 4 (285 aa).

Positions 69, 109, 145, 179, 182, 216, 229, 231, and 261 each coordinate Zn(2+).

It belongs to the AP endonuclease 2 family. Zn(2+) serves as cofactor.

It carries out the reaction Endonucleolytic cleavage to 5'-phosphooligonucleotide end-products.. Its function is as follows. Endonuclease IV plays a role in DNA repair. It cleaves phosphodiester bonds at apurinic or apyrimidinic (AP) sites, generating a 3'-hydroxyl group and a 5'-terminal sugar phosphate. The sequence is that of Probable endonuclease 4 from Salmonella dublin (strain CT_02021853).